The primary structure comprises 253 residues: N-acetylmuramoyl-L-alanine amidase CwlM (253 aa).

Residues 4-172 (IFIDPGHGGS…IARGHANGLA (169 aa)) enclose the MurNAc-LAA domain. The SPOR domain maps to 179–253 (KNAAALYKVQ…AEFDTFIYQE (75 aa)). 2 repeat units span residues 184-219 (LYKV…YRDS) and 220-253 (LYKV…IYQE). Positions 184 to 253 (LYKVQIAAFR…AEFDTFIYQE (70 aa)) are 2 X 35 AA approximate tandem repeats.

The protein belongs to the N-acetylmuramoyl-L-alanine amidase 3 family.

It localises to the secreted. It carries out the reaction Hydrolyzes the link between N-acetylmuramoyl residues and L-amino acid residues in certain cell-wall glycopeptides.. Its function is as follows. Hydrolyzes the cell wall of M.luteus more efficiently than that of B.licheniformis and B.subtilis. The C-terminal region, including the repeats, determines substrate specificity. This is N-acetylmuramoyl-L-alanine amidase CwlM (cwlM) from Bacillus licheniformis.